Consider the following 25-residue polypeptide: LFHYCQCQCPPGFKGKFCQFKLRPP.

Contains 2 disulfide bonds. However, cysteine pairing is not critical for peptide binding to melanocortin receptors, since peptides with different pairings have similar potency at the receptors tested. As to expression, expressed by the venom duct.

The protein resides in the secreted. In terms of biological role, peptide with nanomolar affinity for human melanocortin receptors. The natural disulfide pairing being unknown, the activity of all three possible peptides (with the cysteine pairings 'bead (I-II, III-IV), 'globular' (I-III, II-IV), and 'ribbon' (I-IV, II-III)) have been tested. All three isomers show similar affinities on each human melanocortin subtype (MC1R (~500 nM), MC3R (~100 nM), MC4R (~50 nM), and MC5R (~50 nM)). This Conus litoglyphus (Lithograph cone) protein is NU-conotoxin-Ltg1a.